Here is a 419-residue protein sequence, read N- to C-terminus: Light-dependent chlorophyll f synthase (419 aa).

5 consecutive transmembrane segments (helical) span residues 73-90 (YIGWFGMLAIPTLATAAI), 162-177 (HFIIGIISYQDREWEL), 186-200 (WISLAFTAPVAASVS), 241-262 (LHQMGVIGVLGGALLCAVHGSL), and 323-337 (CLAALPVAGIWSAAI). Residue His-162 coordinates a chlorophyll. An a chlorophyll-binding site is contributed by His-242.

The protein belongs to the reaction center PufL/M/PsbA/D family. Homodimer.

It is found in the cellular thylakoid membrane. Synthesizes chlorophyll f or chlorophyllide f (Chl f, 2-formyl chlorophyll a), probably by oxidation of chlorophyll a or chlorophyllide a and reduction of plastoquinone. The reaction is probably light-dependent. Chl f absorbs far red light (FRL, 707 nm in 100% methanol), and is synthesized when cells are grown in FRL, where it provides the advantage of extending the spectral range of harvested light in terrestrial cyanobacteria. Chl f synthesis is probably light-dependent. In Synechococcus sp. (strain ATCC 29403 / PCC 7335), this protein is Light-dependent chlorophyll f synthase.